The chain runs to 98 residues: MKAIVKRRVEDKLYQNRYLVDPGRPHISVRKHLFPTPNLIALTQVCPAKCYQLNDRRQVIIVSDGCLECGTCNVLCGPDGDIEWTYPRGGFGVLFKFG.

The protein to ferredoxins from P.putida and C.tartarivorum, ferredoxin I from A.vinelandii, ferredoxin II from D.desulfuricans.

In terms of biological role, could be a 3Fe-4S cluster-containing protein. The chain is Ferredoxin-like protein (fixX) from Rhizobium leguminosarum bv. trifolii.